The following is a 326-amino-acid chain: Putative HTH-type transcriptional regulator y4qH (326 aa).

An HTH luxR-type domain is found at 257–322 (AVQKIPALSL…VAAIKAISLG (66 aa)). Residues 281–300 (SWDIGVIMRISENTVNFHIK) constitute a DNA-binding region (H-T-H motif).

It belongs to the autoinducer-regulated transcriptional regulatory protein family.

The protein is Putative HTH-type transcriptional regulator y4qH of Sinorhizobium fredii (strain NBRC 101917 / NGR234).